A 416-amino-acid chain; its full sequence is Phosphoribosylamine--glycine ligase (416 aa).

In terms of domain architecture, ATP-grasp spans 105 to 310; sequence KSFLKKYRIK…PLELILAATQ (206 aa). 131-192 contacts ATP; that stretch reads IYSLTPPIVV…EEFLDGYELS (62 aa). Positions 281 and 283 each coordinate Mg(2+).

Belongs to the GARS family. Mg(2+) is required as a cofactor. Requires Mn(2+) as cofactor.

It carries out the reaction 5-phospho-beta-D-ribosylamine + glycine + ATP = N(1)-(5-phospho-beta-D-ribosyl)glycinamide + ADP + phosphate + H(+). The protein operates within purine metabolism; IMP biosynthesis via de novo pathway; N(1)-(5-phospho-D-ribosyl)glycinamide from 5-phospho-alpha-D-ribose 1-diphosphate: step 2/2. This chain is Phosphoribosylamine--glycine ligase, found in Campylobacter jejuni subsp. jejuni serotype O:2 (strain ATCC 700819 / NCTC 11168).